We begin with the raw amino-acid sequence, 317 residues long: Transaldolase (317 aa).

Lysine 132 serves as the catalytic Schiff-base intermediate with substrate.

It belongs to the transaldolase family. Type 1 subfamily. Homodimer.

It is found in the cytoplasm. The enzyme catalyses D-sedoheptulose 7-phosphate + D-glyceraldehyde 3-phosphate = D-erythrose 4-phosphate + beta-D-fructose 6-phosphate. Its pathway is carbohydrate degradation; pentose phosphate pathway; D-glyceraldehyde 3-phosphate and beta-D-fructose 6-phosphate from D-ribose 5-phosphate and D-xylulose 5-phosphate (non-oxidative stage): step 2/3. Functionally, transaldolase is important for the balance of metabolites in the pentose-phosphate pathway. This is Transaldolase from Histophilus somni (strain 2336) (Haemophilus somnus).